A 328-amino-acid chain; its full sequence is Probable cell division protein WhiA (328 aa).

A DNA-binding region (H-T-H motif) is located at residues 275 to 308 (SLEELGQLHDPVLTKDAIAGRIRRLLAMADKRAE).

Belongs to the WhiA family.

Its function is as follows. Involved in cell division and chromosome segregation. The protein is Probable cell division protein WhiA of Nocardioides sp. (strain ATCC BAA-499 / JS614).